The primary structure comprises 251 residues: UPF0309 protein GK1441 (251 aa).

An SIS domain is found at 31–214 (VSEAIQNGGI…VLMAENGIEP (184 aa)).

It belongs to the UPF0309 family.

The protein is UPF0309 protein GK1441 of Geobacillus kaustophilus (strain HTA426).